The primary structure comprises 129 residues: Protein Turandot A1 (129 aa).

Residues 1 to 21 (MNSSTALMCFALLLISPLCMG) form the signal peptide. N-linked (GlcNAc...) asparagine glycosylation is present at Asn-49.

Belongs to the Turandot family.

The protein resides in the secreted. Functionally, a humoral factor that plays a role in stress tolerance; gives increased resistance to the lethal effects of bacterial challenge and stress. Regulated by the JAK/STAT pathway and NF-KB-like Relish pathway in the fat body, upd3 in the hemocytes and Mekk1 in response to septic injury and consequent immune response. The protein is Protein Turandot A1 (TotA1) of Drosophila simulans (Fruit fly).